The primary structure comprises 222 residues: Probable fimbrial chaperone EcpB (222 aa).

The first 20 residues, 1–20 (MKKHLLPLALLLSGISPAQA), serve as a signal peptide directing secretion.

It belongs to the EcpB/EcpE family.

In terms of biological role, part of the ecpRABCDE operon, which encodes the E.coli common pilus (ECP). ECP is found in both commensal and pathogenic strains and plays a dual role in early-stage biofilm development and host cell recognition. In Escherichia coli O7:K1 (strain IAI39 / ExPEC), this protein is Probable fimbrial chaperone EcpB (ecpB).